The chain runs to 1578 residues: Bromodomain-containing protein DDB_G0270170 (1578 aa).

Residues 1 to 12 (MSLEQQDETVVE) are compositionally biased toward acidic residues. Disordered regions lie at residues 1 to 39 (MSLE…TYKE), 108 to 127 (NNNN…NNTE), 151 to 285 (HYSD…AKEL), and 319 to 454 (NENI…TTQT). The span at 18 to 35 (SFETNNSTANNTNNNTDN) shows a compositional bias: low complexity. Over residues 152–163 (YSDDESSKEKQD) the composition is skewed to basic and acidic residues. Low complexity-rich tracts occupy residues 164–185 (NINS…SENI) and 197–231 (TTPS…TTTN). Composition is skewed to polar residues over residues 319–332 (NENI…STTK) and 340–351 (TASTTNTPIITA). Residues 352 to 383 (QQNTTPLSPTQTTTTTTTPTTTTAQQNTPAQT) show a composition bias toward low complexity. Positions 384 to 395 (ESKPPTTISINI) are enriched in polar residues. Composition is skewed to low complexity over residues 396 to 407 (KGSKSPKTTGGK) and 417 to 433 (VVIS…VATT). Positions 443-454 (STANNNSETTQT) are enriched in polar residues. Positions 479-506 (SDSATIQQLQQSISMLEDKIRLISSNNK) form a coiled coil. 2 disordered regions span residues 543-565 (FTKS…YSDD) and 580-730 (IPIP…RMGK). Low complexity-rich tracts occupy residues 604–653 (NTST…PPQQ) and 660–686 (TQQE…DTTT). Residues 735–841 (VVLTPVFKRC…DVFEKGFPKV (107 aa)) enclose the Bromo domain. A coiled-coil region spans residues 851-903 (KNVDQEKIEKLSNDLKNVTKELEKFKKDDSNSINNNNNNNNNYNNNNNNNNNN). 4 disordered regions span residues 874 to 969 (KFKK…KVTT), 1039 to 1167 (HALP…NNNN), 1184 to 1452 (SIPE…TDSA), and 1480 to 1544 (EREE…KGNM). Low complexity-rich tracts occupy residues 881-911 (NSIN…SSRS), 918-961 (SSGS…SSNN), and 1047-1061 (SSTH…DSSS). The NET domain occupies 957 to 1039 (SSSNNKKYPK…QYKNGEIPQH (83 aa)). Residues 1064–1077 (REIEKLQKQLDRLG) are compositionally biased toward basic and acidic residues. A compositionally biased stretch (basic residues) spans 1092 to 1107 (HSKRISKPISKARGRK). Low complexity predominate over residues 1112–1167 (SSSNLNNSSNNINNNNNNINNYNNNNNYNNNNNNNLNNNNNNNINSNLNNNLNNNN). Residues 1113–1150 (SSNLNNSSNNINNNNNNINNYNNNNNYNNNNNNNLNNN) are a coiled coil. Residues 1192–1204 (TDISESSDSESDS) show a composition bias toward acidic residues. 2 stretches are compositionally biased toward low complexity: residues 1205–1218 (ESGS…YSDS) and 1231–1334 (YNNS…SLTN). Positions 1280-1308 (NSNNNNSNNNNNNVNNNNNNHNNNNHNNN) form a coiled coil. Positions 1356–1369 (SVASWSFDPTNNKE) are enriched in polar residues. Over residues 1370 to 1386 (SSSSSSTSSTSSTSNTT) the composition is skewed to low complexity. Polar residues predominate over residues 1387–1399 (LTPIIQQSSLTHA). Composition is skewed to low complexity over residues 1400-1424 (SSPI…NNLS) and 1432-1451 (NSPS…NTDS). Residues 1462-1544 (TLKQKEKERV…EKLNNSKGNM (83 aa)) are a coiled coil. A compositionally biased stretch (basic and acidic residues) spans 1480–1538 (EREEKEEELKKEEEKKRIEMEEIKRLAKEKEEREAEETRKQIESERAAAREAREKEKLN).

The polypeptide is Bromodomain-containing protein DDB_G0270170 (Dictyostelium discoideum (Social amoeba)).